Consider the following 572-residue polypeptide: Sialate:O-sulfotransferase 2 (572 aa).

The Cytoplasmic portion of the chain corresponds to 1–18 (MARSLLKIHRYFRRKPVR). The chain crosses the membrane as a helical; Signal-anchor for type II membrane protein span at residues 19–39 (FFSFILLYLTAGSLVFLHSGF). The Extracellular portion of the chain corresponds to 40–572 (SSDSSTAGIA…SGVPDEYRPR (533 aa)). WSC domains lie at 134–226 (RAKY…YRLE) and 237–331 (SAIF…YQTQ). N196, N249, N262, and N561 each carry an N-linked (GlcNAc...) asparagine glycan.

It belongs to the WSCD family.

It is found in the golgi apparatus membrane. In terms of biological role, sialate:O-sulfotransferase which catalyzes 8-O-sulfation at the Sia-glycan level using 3'-phosphoadenosine 5'-phosphosulfate (PAPS) as a donor, forming 8-O-sulfated Sia (Sia8S)-glycans. The polypeptide is Sialate:O-sulfotransferase 2 (wscd2) (Danio rerio (Zebrafish)).